Reading from the N-terminus, the 648-residue chain is 1-deoxy-D-xylulose-5-phosphate synthase 1 (648 aa).

Thiamine diphosphate-binding positions include His-82 and 123–125 (AHS). Position 154 (Asp-154) interacts with Mg(2+). Thiamine diphosphate is bound by residues 155-156 (GS), Asn-183, Tyr-292, and Glu-374. Asn-183 serves as a coordination point for Mg(2+).

The protein belongs to the transketolase family. DXPS subfamily. As to quaternary structure, homodimer. Mg(2+) serves as cofactor. Requires thiamine diphosphate as cofactor.

The catalysed reaction is D-glyceraldehyde 3-phosphate + pyruvate + H(+) = 1-deoxy-D-xylulose 5-phosphate + CO2. It functions in the pathway metabolic intermediate biosynthesis; 1-deoxy-D-xylulose 5-phosphate biosynthesis; 1-deoxy-D-xylulose 5-phosphate from D-glyceraldehyde 3-phosphate and pyruvate: step 1/1. Catalyzes the acyloin condensation reaction between C atoms 2 and 3 of pyruvate and glyceraldehyde 3-phosphate to yield 1-deoxy-D-xylulose-5-phosphate (DXP). This Cereibacter sphaeroides (strain ATCC 17023 / DSM 158 / JCM 6121 / CCUG 31486 / LMG 2827 / NBRC 12203 / NCIMB 8253 / ATH 2.4.1.) (Rhodobacter sphaeroides) protein is 1-deoxy-D-xylulose-5-phosphate synthase 1.